Here is a 126-residue protein sequence, read N- to C-terminus: Protein ApaG (126 aa).

The region spanning 2–126 (SDPRYQIDVS…FRLAVPGALH (125 aa)) is the ApaG domain.

This chain is Protein ApaG, found in Pseudomonas putida (strain ATCC 700007 / DSM 6899 / JCM 31910 / BCRC 17059 / LMG 24140 / F1).